The sequence spans 156 residues: Endoribonuclease YbeY (156 aa).

Residues His122, His126, and His132 each contribute to the Zn(2+) site.

This sequence belongs to the endoribonuclease YbeY family. Requires Zn(2+) as cofactor.

Its subcellular location is the cytoplasm. Its function is as follows. Single strand-specific metallo-endoribonuclease involved in late-stage 70S ribosome quality control and in maturation of the 3' terminus of the 16S rRNA. The chain is Endoribonuclease YbeY from Bacillus cereus (strain ZK / E33L).